The chain runs to 381 residues: tRNA-cytidine(32) 2-sulfurtransferase (381 aa).

Residues 101–106 carry the PP-loop motif motif; it reads SGGKDS. Residues cysteine 176, cysteine 179, and cysteine 267 each coordinate [4Fe-4S] cluster.

This sequence belongs to the TtcA family. As to quaternary structure, homodimer. The cofactor is Mg(2+). It depends on [4Fe-4S] cluster as a cofactor.

Its subcellular location is the cytoplasm. It carries out the reaction cytidine(32) in tRNA + S-sulfanyl-L-cysteinyl-[cysteine desulfurase] + AH2 + ATP = 2-thiocytidine(32) in tRNA + L-cysteinyl-[cysteine desulfurase] + A + AMP + diphosphate + H(+). The protein operates within tRNA modification. Its function is as follows. Catalyzes the ATP-dependent 2-thiolation of cytidine in position 32 of tRNA, to form 2-thiocytidine (s(2)C32). The sulfur atoms are provided by the cysteine/cysteine desulfurase (IscS) system. The protein is tRNA-cytidine(32) 2-sulfurtransferase of Psychrobacter arcticus (strain DSM 17307 / VKM B-2377 / 273-4).